We begin with the raw amino-acid sequence, 190 residues long: Frizzled-6 (190 aa).

The FZ domain occupies 1–20 (FGFAWPEELECSRLVNCDET). Topologically, residues 1-89 (FGFAWPEELE…NYELDVAKSF (89 aa)) are extracellular. Residues 90–110 (IGIVSIFCLCATLFTFLTFLI) traverse the membrane as a helical segment. The Cytoplasmic portion of the chain corresponds to 111 to 121 (DVKRFRYPERP). The chain crosses the membrane as a helical span at residues 122–142 (IIYYSVCYSIVSLMYFIGFLL). Residues 143–169 (GNRTACNKADDKLEIGETVVLGSQNKA) lie on the Extracellular side of the membrane. N-linked (GlcNAc...) asparagine glycosylation occurs at Asn144. A helical transmembrane segment spans residues 170–190 (CTVLFMVLYFFTMAGTIWWVI).

Belongs to the G-protein coupled receptor Fz/Smo family.

The protein resides in the membrane. Its subcellular location is the cell membrane. The protein localises to the cell surface. It localises to the apical cell membrane. It is found in the cytoplasmic vesicle membrane. Its function is as follows. Receptor for Wnt proteins. Most of frizzled receptors are coupled to the beta-catenin canonical signaling pathway, which leads to the activation of disheveled proteins, inhibition of GSK-3 kinase, nuclear accumulation of beta-catenin and activation of Wnt target genes. A second signaling pathway involving PKC and calcium fluxes has been seen for some family members, but it is not yet clear if it represents a distinct pathway or if it can be integrated in the canonical pathway, as PKC seems to be required for Wnt-mediated inactivation of GSK-3 kinase. Both pathways seem to involve interactions with G-proteins. Activation by Wnt5A stimulates PKC activity via a G-protein-dependent mechanism. Involved in transduction and intercellular transmission of polarity information during tissue morphogenesis and/or in differentiated tissues. Together with FZD3, may be involved in the neural tube closure and plays a role in the regulation of the establishment of planar cell polarity (PCP), particularly in the orientation of asymmetric bundles of stereocilia on the apical faces of a subset of auditory and vestibular sensory cells located in the inner ear. The protein is Frizzled-6 (FZD6) of Gallus gallus (Chicken).